The primary structure comprises 422 residues: Enolase (422 aa).

Gln162 serves as a coordination point for (2R)-2-phosphoglycerate. Glu204 (proton donor) is an active-site residue. Residues Asp241, Glu284, and Asp311 each contribute to the Mg(2+) site. The (2R)-2-phosphoglycerate site is built by Lys336, Arg365, Ser366, and Lys387. Lys336 acts as the Proton acceptor in catalysis.

This sequence belongs to the enolase family. As to quaternary structure, component of the RNA degradosome, a multiprotein complex involved in RNA processing and mRNA degradation. Requires Mg(2+) as cofactor.

It localises to the cytoplasm. Its subcellular location is the secreted. It is found in the cell surface. It carries out the reaction (2R)-2-phosphoglycerate = phosphoenolpyruvate + H2O. The protein operates within carbohydrate degradation; glycolysis; pyruvate from D-glyceraldehyde 3-phosphate: step 4/5. Its function is as follows. Catalyzes the reversible conversion of 2-phosphoglycerate (2-PG) into phosphoenolpyruvate (PEP). It is essential for the degradation of carbohydrates via glycolysis. The polypeptide is Enolase (Legionella pneumophila (strain Corby)).